The following is a 314-amino-acid chain: PDZ domain-containing protein GIPC2 (314 aa).

The segment covering 1–12 (MPLGLRGKKKAA) has biased composition (basic residues). The interval 1 to 36 (MPLGLRGKKKAAKSKETARLVEGERSGGSQGVPGPP) is disordered. Residues 13–25 (KSKETARLVEGER) are compositionally biased toward basic and acidic residues. The region spanning 117–197 (EVNVYKSEDS…EELFTLQLIE (81 aa)) is the PDZ domain.

Belongs to the GIPC family. In terms of assembly, probably interacts with SEMA5A.

The protein localises to the cytoplasm. This is PDZ domain-containing protein GIPC2 (Gipc2) from Rattus norvegicus (Rat).